A 572-amino-acid polypeptide reads, in one-letter code: Proline--tRNA ligase (572 aa).

Belongs to the class-II aminoacyl-tRNA synthetase family. ProS type 1 subfamily. As to quaternary structure, homodimer.

The protein localises to the cytoplasm. It carries out the reaction tRNA(Pro) + L-proline + ATP = L-prolyl-tRNA(Pro) + AMP + diphosphate. In terms of biological role, catalyzes the attachment of proline to tRNA(Pro) in a two-step reaction: proline is first activated by ATP to form Pro-AMP and then transferred to the acceptor end of tRNA(Pro). As ProRS can inadvertently accommodate and process non-cognate amino acids such as alanine and cysteine, to avoid such errors it has two additional distinct editing activities against alanine. One activity is designated as 'pretransfer' editing and involves the tRNA(Pro)-independent hydrolysis of activated Ala-AMP. The other activity is designated 'posttransfer' editing and involves deacylation of mischarged Ala-tRNA(Pro). The misacylated Cys-tRNA(Pro) is not edited by ProRS. The polypeptide is Proline--tRNA ligase (Dichelobacter nodosus (strain VCS1703A)).